Here is a 453-residue protein sequence, read N- to C-terminus: Bifunctional protein GlmU (453 aa).

Residues 1–231 form a pyrophosphorylase region; sequence MERTCLAVIL…EIEMTGCNNR (231 aa). Residues 10–13, Lys24, Gln77, 82–83, 105–107, Gly143, Glu157, Asn172, and Asn229 each bind UDP-N-acetyl-alpha-D-glucosamine; these read LAAG, GT, and YGD. Asp107 contributes to the Mg(2+) binding site. Position 229 (Asn229) interacts with Mg(2+). The tract at residues 232–252 is linker; that stretch reads AELAVIERFWQERRRREMMLA. The tract at residues 253–453 is N-acetyltransferase; it reads GVTMIAPETV…AIKAAKRAKA (201 aa). Arg318 and Lys336 together coordinate UDP-N-acetyl-alpha-D-glucosamine. Catalysis depends on His348, which acts as the Proton acceptor. Tyr351 and Asn362 together coordinate UDP-N-acetyl-alpha-D-glucosamine. Residues Ala365, 371-372, Ser390, Ser408, and Arg425 each bind acetyl-CoA; that span reads NY.

It in the N-terminal section; belongs to the N-acetylglucosamine-1-phosphate uridyltransferase family. This sequence in the C-terminal section; belongs to the transferase hexapeptide repeat family. Homotrimer. Mg(2+) is required as a cofactor.

The protein resides in the cytoplasm. The enzyme catalyses alpha-D-glucosamine 1-phosphate + acetyl-CoA = N-acetyl-alpha-D-glucosamine 1-phosphate + CoA + H(+). It carries out the reaction N-acetyl-alpha-D-glucosamine 1-phosphate + UTP + H(+) = UDP-N-acetyl-alpha-D-glucosamine + diphosphate. It participates in nucleotide-sugar biosynthesis; UDP-N-acetyl-alpha-D-glucosamine biosynthesis; N-acetyl-alpha-D-glucosamine 1-phosphate from alpha-D-glucosamine 6-phosphate (route II): step 2/2. The protein operates within nucleotide-sugar biosynthesis; UDP-N-acetyl-alpha-D-glucosamine biosynthesis; UDP-N-acetyl-alpha-D-glucosamine from N-acetyl-alpha-D-glucosamine 1-phosphate: step 1/1. Its pathway is bacterial outer membrane biogenesis; LPS lipid A biosynthesis. Functionally, catalyzes the last two sequential reactions in the de novo biosynthetic pathway for UDP-N-acetylglucosamine (UDP-GlcNAc). The C-terminal domain catalyzes the transfer of acetyl group from acetyl coenzyme A to glucosamine-1-phosphate (GlcN-1-P) to produce N-acetylglucosamine-1-phosphate (GlcNAc-1-P), which is converted into UDP-GlcNAc by the transfer of uridine 5-monophosphate (from uridine 5-triphosphate), a reaction catalyzed by the N-terminal domain. In Rhizobium etli (strain CIAT 652), this protein is Bifunctional protein GlmU.